A 202-amino-acid chain; its full sequence is MSRYRGPRLRITRRLGDLPGLTRKAAKRSYPPGQHGQARRKRSEYAIRLEEKQKLRFNYGVSERQLVRYVKKARAQEGSTGTNLLKLLESRLDNICFRLGFGPTVPGSRQLVNHGHVTVNGRVTDIASYQVKPGDVLAIREKKGSKQLAEGNLAFPGLSNIPPHLELDKAKLSAKCTGRCEREWVALEINELLVVEYYSRKV.

The disordered stretch occupies residues 15–42; it reads LGDLPGLTRKAAKRSYPPGQHGQARRKR. Positions 90 to 152 constitute an S4 RNA-binding domain; that stretch reads SRLDNICFRL…KGSKQLAEGN (63 aa).

It belongs to the universal ribosomal protein uS4 family. In terms of assembly, part of the 30S ribosomal subunit. Contacts protein S5. The interaction surface between S4 and S5 is involved in control of translational fidelity.

In terms of biological role, one of the primary rRNA binding proteins, it binds directly to 16S rRNA where it nucleates assembly of the body of the 30S subunit. Its function is as follows. With S5 and S12 plays an important role in translational accuracy. The polypeptide is Small ribosomal subunit protein uS4 (Synechococcus sp. (strain CC9902)).